We begin with the raw amino-acid sequence, 63 residues long: Large ribosomal subunit protein uL30 (63 aa).

The protein belongs to the universal ribosomal protein uL30 family. In terms of assembly, part of the 50S ribosomal subunit.

This is Large ribosomal subunit protein uL30 from Xylella fastidiosa (strain M23).